A 172-amino-acid chain; its full sequence is Ribosome maturation factor RimM (172 aa).

Positions 93–167 (DEHEFYYHEI…RVVITPIPGM (75 aa)) constitute a PRC barrel domain.

It belongs to the RimM family. As to quaternary structure, binds ribosomal protein uS19.

It is found in the cytoplasm. Its function is as follows. An accessory protein needed during the final step in the assembly of 30S ribosomal subunit, possibly for assembly of the head region. Essential for efficient processing of 16S rRNA. May be needed both before and after RbfA during the maturation of 16S rRNA. It has affinity for free ribosomal 30S subunits but not for 70S ribosomes. The protein is Ribosome maturation factor RimM of Exiguobacterium sp. (strain ATCC BAA-1283 / AT1b).